The primary structure comprises 350 residues: Histidinol-phosphate aminotransferase (350 aa).

Lys-209 carries the post-translational modification N6-(pyridoxal phosphate)lysine.

Belongs to the class-II pyridoxal-phosphate-dependent aminotransferase family. Histidinol-phosphate aminotransferase subfamily. As to quaternary structure, homodimer. The cofactor is pyridoxal 5'-phosphate.

The catalysed reaction is L-histidinol phosphate + 2-oxoglutarate = 3-(imidazol-4-yl)-2-oxopropyl phosphate + L-glutamate. It functions in the pathway amino-acid biosynthesis; L-histidine biosynthesis; L-histidine from 5-phospho-alpha-D-ribose 1-diphosphate: step 7/9. This is Histidinol-phosphate aminotransferase from Geobacter sp. (strain M21).